The sequence spans 594 residues: Bifunctional lycopene cyclase/phytoene synthase (594 aa).

The lycopene beta-cyclase stretch occupies residues 1-249 (MGLDYLMVHV…VVFGIAAMHN (249 aa)). Transmembrane regions (helical) follow at residues 3–23 (LDYLMVHVKYNLPPALLLTIL), 35–55 (KIVLLCTIAVVWTIPWDSYLI), 77–97 (LEEVFFFIIQTYNTSLLYIIF), 130–150 (LGTLFFTGILILGISFIYIGG), 153–173 (MYLGLILSWVSPILVMQWVLM), 176–196 (FLLALPPASVWVPIALPTLYL), and 227–247 (IEEALFFLVTNVMVVFGIAAM). The phytoene synthase stretch occupies residues 256 to 594 (YKAFISTTAM…RFKRAWLAML (339 aa)).

This sequence in the N-terminal section; belongs to the lycopene beta-cyclase family. In the C-terminal section; belongs to the phytoene/squalene synthase family.

It localises to the membrane. It carries out the reaction all-trans-lycopene = gamma-carotene. It catalyses the reaction gamma-carotene = all-trans-beta-carotene. The catalysed reaction is 2 (2E,6E,10E)-geranylgeranyl diphosphate = 15-cis-phytoene + 2 diphosphate. The protein operates within carotenoid biosynthesis; beta-carotene biosynthesis. It participates in carotenoid biosynthesis; phytoene biosynthesis; all-trans-phytoene from geranylgeranyl diphosphate: step 1/1. Its function is as follows. Bifunctional enzyme that catalyzes the reactions from geranylgeranyl diphosphate to phytoene (phytoene synthase) and lycopene to beta-carotene via the intermediate gamma-carotene (lycopene cyclase). This is Bifunctional lycopene cyclase/phytoene synthase from Arthroderma gypseum (strain ATCC MYA-4604 / CBS 118893) (Microsporum gypseum).